Here is a 182-residue protein sequence, read N- to C-terminus: NADH-quinone oxidoreductase subunit I (182 aa).

4Fe-4S ferredoxin-type domains are found at residues 52–82 (LTRDPDGEERCVACNLCAVACPVGCISLQKA) and 92–121 (DFFRINFSRCIFCGLCEEACPTTAIQLTPD). Positions 62, 65, 68, 72, 101, 104, 107, and 111 each coordinate [4Fe-4S] cluster.

Belongs to the complex I 23 kDa subunit family. As to quaternary structure, NDH-1 is composed of 13 different subunits. Subunits NuoA, H, J, K, L, M, N constitute the membrane sector of the complex. Requires [4Fe-4S] cluster as cofactor.

It is found in the cell inner membrane. It catalyses the reaction a quinone + NADH + 5 H(+)(in) = a quinol + NAD(+) + 4 H(+)(out). Its function is as follows. NDH-1 shuttles electrons from NADH, via FMN and iron-sulfur (Fe-S) centers, to quinones in the respiratory chain. The immediate electron acceptor for the enzyme in this species is believed to be ubiquinone. Couples the redox reaction to proton translocation (for every two electrons transferred, four hydrogen ions are translocated across the cytoplasmic membrane), and thus conserves the redox energy in a proton gradient. The polypeptide is NADH-quinone oxidoreductase subunit I (Pseudomonas fluorescens (strain Pf0-1)).